A 476-amino-acid polypeptide reads, in one-letter code: Bifunctional protein HldE (476 aa).

The segment at Met1–Thr318 is ribokinase. ATP is bound at residue Asn195–Glu198. Residue Asp264 is part of the active site. Residues Met344 to Gly476 form a cytidylyltransferase region.

In the N-terminal section; belongs to the carbohydrate kinase PfkB family. This sequence in the C-terminal section; belongs to the cytidylyltransferase family. In terms of assembly, homodimer.

The catalysed reaction is D-glycero-beta-D-manno-heptose 7-phosphate + ATP = D-glycero-beta-D-manno-heptose 1,7-bisphosphate + ADP + H(+). It carries out the reaction D-glycero-beta-D-manno-heptose 1-phosphate + ATP + H(+) = ADP-D-glycero-beta-D-manno-heptose + diphosphate. It participates in nucleotide-sugar biosynthesis; ADP-L-glycero-beta-D-manno-heptose biosynthesis; ADP-L-glycero-beta-D-manno-heptose from D-glycero-beta-D-manno-heptose 7-phosphate: step 1/4. Its pathway is nucleotide-sugar biosynthesis; ADP-L-glycero-beta-D-manno-heptose biosynthesis; ADP-L-glycero-beta-D-manno-heptose from D-glycero-beta-D-manno-heptose 7-phosphate: step 3/4. The protein operates within bacterial outer membrane biogenesis; LPS core biosynthesis. Functionally, catalyzes the phosphorylation of D-glycero-D-manno-heptose 7-phosphate at the C-1 position to selectively form D-glycero-beta-D-manno-heptose-1,7-bisphosphate. Its function is as follows. Catalyzes the ADP transfer from ATP to D-glycero-beta-D-manno-heptose 1-phosphate, yielding ADP-D-glycero-beta-D-manno-heptose. The chain is Bifunctional protein HldE from Vibrio vulnificus (strain YJ016).